A 249-amino-acid polypeptide reads, in one-letter code: Large ribosomal subunit protein uL1 (249 aa).

It belongs to the universal ribosomal protein uL1 family. In terms of assembly, part of the 50S ribosomal subunit.

Its function is as follows. Binds directly to 23S rRNA. The L1 stalk is quite mobile in the ribosome, and is involved in E site tRNA release. In terms of biological role, protein L1 is also a translational repressor protein, it controls the translation of the L11 operon by binding to its mRNA. In Orientia tsutsugamushi (strain Ikeda) (Rickettsia tsutsugamushi), this protein is Large ribosomal subunit protein uL1.